We begin with the raw amino-acid sequence, 321 residues long: Beta-ketoacyl-[acyl-carrier-protein] synthase III (321 aa).

Active-site residues include cysteine 115 and histidine 248. The ACP-binding stretch occupies residues 249–253 (QANIR). Asparagine 278 is a catalytic residue.

The protein belongs to the thiolase-like superfamily. FabH family. As to quaternary structure, homodimer.

Its subcellular location is the cytoplasm. The catalysed reaction is malonyl-[ACP] + acetyl-CoA + H(+) = 3-oxobutanoyl-[ACP] + CO2 + CoA. It functions in the pathway lipid metabolism; fatty acid biosynthesis. Catalyzes the condensation reaction of fatty acid synthesis by the addition to an acyl acceptor of two carbons from malonyl-ACP. Catalyzes the first condensation reaction which initiates fatty acid synthesis and may therefore play a role in governing the total rate of fatty acid production. Possesses both acetoacetyl-ACP synthase and acetyl transacylase activities. Its substrate specificity determines the biosynthesis of branched-chain and/or straight-chain of fatty acids. In Azoarcus sp. (strain BH72), this protein is Beta-ketoacyl-[acyl-carrier-protein] synthase III.